A 274-amino-acid chain; its full sequence is D-aminoacyl-tRNA deacylase (274 aa).

Belongs to the DtdA deacylase family. In terms of assembly, monomer. Requires Zn(2+) as cofactor.

It catalyses the reaction a D-aminoacyl-tRNA + H2O = a tRNA + a D-alpha-amino acid + H(+). It carries out the reaction glycyl-tRNA(Ala) + H2O = tRNA(Ala) + glycine + H(+). In terms of biological role, D-aminoacyl-tRNA deacylase with broad substrate specificity. By recycling D-aminoacyl-tRNA to D-amino acids and free tRNA molecules, this enzyme counteracts the toxicity associated with the formation of D-aminoacyl-tRNA entities in vivo. This chain is D-aminoacyl-tRNA deacylase, found in Pyrococcus horikoshii (strain ATCC 700860 / DSM 12428 / JCM 9974 / NBRC 100139 / OT-3).